The chain runs to 454 residues: Probable succinate-semialdehyde dehydrogenase [NADP(+)] (454 aa).

NADP(+) is bound by residues 130-131 (WN), 154-157 (KHAS), and 206-207 (GS). Glu228 (proton acceptor) is an active-site residue. Leu229 is a binding site for NADP(+). Catalysis depends on Cys262, which acts as the Nucleophile. Glu359 contributes to the NADP(+) binding site.

Belongs to the aldehyde dehydrogenase family.

It carries out the reaction succinate semialdehyde + NADP(+) + H2O = succinate + NADPH + 2 H(+). The protein operates within amino-acid degradation; 4-aminobutanoate degradation. Functionally, catalyzes the NADP(+) dependent oxidation of succinate semialdehyde to succinate. The sequence is that of Probable succinate-semialdehyde dehydrogenase [NADP(+)] (gabD) from Synechocystis sp. (strain ATCC 27184 / PCC 6803 / Kazusa).